The primary structure comprises 83 residues: Kappa-ctenitoxin-Pn1a (83 aa).

The N-terminal stretch at 1–21 is a signal peptide; that stretch reads MWFKIQVLVLAITLITLGIQA. A propeptide spanning residues 22–37 is cleaved from the precursor; it reads EPNSSPNNPLIVEEDR. 4 cysteine pairs are disulfide-bonded: cysteine 40-cysteine 55, cysteine 47-cysteine 60, cysteine 54-cysteine 71, and cysteine 62-cysteine 69. A propeptide spanning residues 78–83 is cleaved from the precursor; it reads LFGFGK.

The protein belongs to the neurotoxin 02 (plectoxin) family. In terms of tissue distribution, expressed by the venom gland.

Its subcellular location is the secreted. Functionally, antagonist of L-type calcium channels (Cav1/CACNA1). In GH3 neuroendocrinal cell line, it reversibly inhibits the A-type potassium current but does not block other potassium currents or calcium channels. Shows an important acetylcholine-mediated antiarrhythmogenic effect in isolated hearts. In vivo, causes paralysis in the posterior limbs and gradual decreases in movement and aggression during 24 hours at dose levels of 5 ug per mouse. In Phoneutria nigriventer (Brazilian armed spider), this protein is Kappa-ctenitoxin-Pn1a.